The primary structure comprises 650 residues: MSEAHIYPVKENIKAHTHADNDTYLAMYQQSVTDPERFWSEHGKIVDWIKPFTKVKQTSFDTGHVDIRWFEDGTLNVSANCIDRHLAERGDDVAIIWEGDNPEDDKTLTYNELYTEVCRFSNALKEQGVRKGDVVCLYMPMVPEAAVAMLACTRIGAVHTIVFGGFSPEALAGRIIDSDAKVVITADEGVRGGRAVPLKKNVDEALTNPEVKTISKVVVFKRTGGNIDWHEHRDVWWHEATAKVSDVCPPEEMKAEDPLFILYTSGSTGKPKGVLHTTGGYLVYATMTFKYVFDYQPGETFWCTADVGWITGHTYLVYGPLANGAKTILFEGVPNYPNTSRMSEVVDKHQVNILYTAPTAIRALMAKGNEAIEGTDRSSLRIMGSVGEPINPEAWEWYYKTIGNEKSPIVDTWWQTETGGILITPLPGATALKPGSATRPFFGVQPALVDNMGNVIEDQAAEGNLVILDSWPGQMRTVYGDHERFEQTYFSTFKGMYFTGDGARRDEDGYYWITGRVDDVLNVSGHRMGTAEIESALVAHPKIAEAAIVGIPHDIKGQAIYAYVTLNAGEYPTAELHKEVKDWVRKEIGPIATPDVLHWTDALPKTRSGKIMRRILRKIATGDTSNLGDTSTLADPSVVDKLIAEKAELV.

CoA contacts are provided by residues 191–194, Thr311, and Asn335; that span reads RGGR. Residues 387–389, 411–416, Asp501, and Arg516 contribute to the ATP site; these read GEP and DTWWQT. CoA is bound at residue Ser524. Arg527 contacts ATP. 3 residues coordinate Mg(2+): Val538, His540, and Ile543. CoA is bound at residue Arg585. Residue Lys610 is modified to N6-acetyllysine.

It belongs to the ATP-dependent AMP-binding enzyme family. Mg(2+) serves as cofactor. Acetylated. Deacetylation by the SIR2-homolog deacetylase activates the enzyme.

The catalysed reaction is acetate + ATP + CoA = acetyl-CoA + AMP + diphosphate. Catalyzes the conversion of acetate into acetyl-CoA (AcCoA), an essential intermediate at the junction of anabolic and catabolic pathways. AcsA undergoes a two-step reaction. In the first half reaction, AcsA combines acetate with ATP to form acetyl-adenylate (AcAMP) intermediate. In the second half reaction, it can then transfer the acetyl group from AcAMP to the sulfhydryl group of CoA, forming the product AcCoA. This is Acetyl-coenzyme A synthetase from Vibrio vulnificus (strain CMCP6).